The following is a 127-amino-acid chain: MQRTLLLAKIHNCTLTGANINYVGSISIDQILLDKSGILPYEQVQVVNNANGQRFITYAIPAPAHSGIIELNGAAARLGIIGDRVIIMTYGQFTSEELKSYTPTVVIVDEKNRPLEVRRYDDLLSQV.

The Schiff-base intermediate with substrate; via pyruvic acid role is filled by serine 25. Serine 25 bears the Pyruvic acid (Ser) mark. Residue threonine 57 coordinates substrate. The active-site Proton donor is tyrosine 58. 73–75 (GAA) serves as a coordination point for substrate.

It belongs to the PanD family. Heterooctamer of four alpha and four beta subunits. Pyruvate is required as a cofactor. Is synthesized initially as an inactive proenzyme, which is activated by self-cleavage at a specific serine bond to produce a beta-subunit with a hydroxyl group at its C-terminus and an alpha-subunit with a pyruvoyl group at its N-terminus.

The protein resides in the cytoplasm. The enzyme catalyses L-aspartate + H(+) = beta-alanine + CO2. Its pathway is cofactor biosynthesis; (R)-pantothenate biosynthesis; beta-alanine from L-aspartate: step 1/1. Catalyzes the pyruvoyl-dependent decarboxylation of aspartate to produce beta-alanine. This Trichormus variabilis (strain ATCC 29413 / PCC 7937) (Anabaena variabilis) protein is Aspartate 1-decarboxylase.